We begin with the raw amino-acid sequence, 464 residues long: ATP synthase subunit beta (464 aa).

151 to 158 (GGAGVGKT) provides a ligand contact to ATP.

The protein belongs to the ATPase alpha/beta chains family. In terms of assembly, F-type ATPases have 2 components, CF(1) - the catalytic core - and CF(0) - the membrane proton channel. CF(1) has five subunits: alpha(3), beta(3), gamma(1), delta(1), epsilon(1). CF(0) has three main subunits: a(1), b(2) and c(9-12). The alpha and beta chains form an alternating ring which encloses part of the gamma chain. CF(1) is attached to CF(0) by a central stalk formed by the gamma and epsilon chains, while a peripheral stalk is formed by the delta and b chains.

It localises to the cell membrane. It catalyses the reaction ATP + H2O + 4 H(+)(in) = ADP + phosphate + 5 H(+)(out). Its function is as follows. Produces ATP from ADP in the presence of a proton gradient across the membrane. The catalytic sites are hosted primarily by the beta subunits. This is ATP synthase subunit beta from Clostridium kluyveri (strain ATCC 8527 / DSM 555 / NBRC 12016 / NCIMB 10680 / K1).